The following is a 1312-amino-acid chain: Angiotensin-converting enzyme (1312 aa).

A signal peptide spans 1–34 (MGAASGQRGRWPLSPPLLMLSLLVLLLQPSPAPA). The Extracellular segment spans residues 35-1264 (LDPGLQPGNF…LEPQQARVGQ (1230 aa)). Peptidase M2 domains lie at 45-629 (SPDE…LGWP) and 648-1227 (ETDE…LGWP). Asparagine 59, asparagine 79, asparagine 116, asparagine 151, and asparagine 165 each carry an N-linked (GlcNAc...) asparagine glycan. Cysteine 162 and cysteine 170 are oxidised to a cystine. Position 236 (tyrosine 236) interacts with chloride. N-linked (GlcNAc...) asparagine glycosylation is present at asparagine 323. Residues cysteine 364 and cysteine 382 are joined by a disulfide bond. A Zn(2+)-binding site is contributed by histidine 395. The active-site Proton acceptor 1 is the glutamate 396. The Zn(2+) site is built by histidine 399 and glutamate 423. The N-linked (GlcNAc...) asparagine glycan is linked to asparagine 514. Catalysis depends on histidine 525, which acts as the Proton donor 1. Arginine 534 lines the chloride pocket. Residues cysteine 550 and cysteine 562 are joined by a disulfide bond. A glycan (N-linked (GlcNAc...) asparagine) is linked at asparagine 682. N-linked (GlcNAc...) (complex) asparagine glycosylation is found at asparagine 700 and asparagine 719. Cysteine 762 and cysteine 768 form a disulfide bridge. N-linked (GlcNAc...) asparagine glycosylation is present at asparagine 765. The chloride site is built by arginine 796 and tyrosine 834. The N-linked (GlcNAc...) asparagine glycan is linked to asparagine 947. Cysteines 962 and 980 form a disulfide. Histidine 993 provides a ligand contact to Zn(2+). Glutamate 994 functions as the Proton acceptor 2 in the catalytic mechanism. The Zn(2+) site is built by histidine 997 and glutamate 1021. Positions 1095 and 1099 each coordinate chloride. The active-site Proton donor 2 is histidine 1123. Arginine 1132 serves as a coordination point for chloride. A disulfide bridge links cysteine 1148 with cysteine 1160. N-linked (GlcNAc...) asparagine glycosylation is present at asparagine 1196. A juxtamembrane stalk region spans residues 1220 to 1261 (HGETLGWPEYNWAPNTARAEGSTAESNRVNFLGLYLEPQQAR). A helical membrane pass occupies residues 1265-1281 (WVLLFLGVALLVATVGL). The Cytoplasmic portion of the chain corresponds to 1282-1312 (AHRLYNIRNHHSLRRPHRGPQFGSEVELRHS). Serine 1305 bears the Phosphoserine mark.

Belongs to the peptidase M2 family. In terms of assembly, monomer and homodimer; homodimerizes following binding to an inhibitor. Interacts with calmodulin (CALM1, CALM2 or CALM3); interaction takes place in the cytoplasmic region and regulates phosphorylation and proteolytic cleavage. Zn(2+) serves as cofactor. The cofactor is chloride. In terms of processing, produced following proteolytic cleavage by secretase enzymes that cleave the transmembrane form in the juxtamembrane stalk region upstream of the transmembrane region. Cleavage can take place at different sites of the juxtamembrane stalk region. Post-translationally, phosphorylated by CK2 on Ser-1305; which allows membrane retention. Phosphorylated on tyrosine residues on its extracellular part, promoting cleavage by secretase enzymes and formation of the soluble form (Angiotensin-converting enzyme, soluble form). In terms of tissue distribution, highly expressed in kidney and lung; not expressed in the liver. In the brain, expressed in the cerebral cortex, hippocampus, cerebellum and basal ganglia/brainstem. Highly expressed in dopamine receptor DRD1-expressing neurons in the dorsal striatum and the nucleus accumbens of the brain. As to expression, specifically expressed in spermatocytes, adult testis.

The protein resides in the cell membrane. It is found in the cytoplasm. The protein localises to the secreted. The catalysed reaction is Release of a C-terminal dipeptide, oligopeptide-|-Xaa-Yaa, when Xaa is not Pro, and Yaa is neither Asp nor Glu. Thus, conversion of angiotensin I to angiotensin II, with increase in vasoconstrictor activity, but no action on angiotensin II.. It carries out the reaction angiotensin I + H2O = L-histidyl-L-leucine + angiotensin II. The enzyme catalyses bradykinin + H2O = L-Phe-L-Arg + bradykinin(1-7). It catalyses the reaction substance P + H2O = substance P(1-9) + L-Leu-L-Met-NH2. The catalysed reaction is substance P + H2O = substance P(1-8) + Gly-L-Leu-L-Met-NH2. It carries out the reaction substance P + H2O = L-Phe-L-Phe-Gly-L-Leu-L-Met-NH2 + substance P(1-6). The enzyme catalyses neurotensin + H2O = neurotensin(1-11) + L-isoleucyl-L-leucine. It catalyses the reaction goralatide + H2O = N-acetyl-L-seryl-L-aspartate + L-lysyl-L-proline. The catalysed reaction is Met-enkephalin + H2O = L-phenylalanyl-L-methionine + L-tyrosylglycylglycine. It carries out the reaction Leu-enkephalin + H2O = L-tyrosylglycylglycine + L-phenylalanyl-L-leucine. The enzyme catalyses Met-enkephalin-Arg-Phe + H2O = L-arginyl-L-phenylalanine + Met-enkephalin. With respect to regulation, the dipeptidyl carboxypeptidase activity is specifically inhibited by lisinopril, captopril and enalaprilat. The N-terminal catalytic domain, but not the C-terminal catalytic domain, is specifically inhibited by the phosphinic peptide RXP 407. The putative GPIase activity is nearly insensitive to captopril. In terms of biological role, dipeptidyl carboxypeptidase that removes dipeptides from the C-terminus of a variety of circulating hormones, such as angiotensin I, bradykinin or enkephalins, thereby playing a key role in the regulation of blood pressure, electrolyte homeostasis or synaptic plasticity. Composed of two similar catalytic domains, each possessing a functional active site, with different selectivity for substrates. Plays a major role in the angiotensin-renin system that regulates blood pressure and sodium retention by the kidney by converting angiotensin I to angiotensin II, resulting in an increase of the vasoconstrictor activity of angiotensin. Also able to inactivate bradykinin, a potent vasodilator, and therefore enhance the blood pressure response. Acts as a regulator of synaptic transmission by mediating cleavage of neuropeptide hormones, such as substance P, neurotensin or enkephalins. Catalyzes degradation of different enkephalin neuropeptides (Met-enkephalin, Leu-enkephalin, Met-enkephalin-Arg-Phe and possibly Met-enkephalin-Arg-Gly-Leu). Acts as a regulator of synaptic plasticity in the nucleus accumbens of the brain by mediating cleavage of Met-enkephalin-Arg-Phe, a strong ligand of Mu-type opioid receptor OPRM1, into Met-enkephalin. Met-enkephalin-Arg-Phe cleavage by ACE decreases activation of OPRM1, leading to long-term synaptic potentiation of glutamate release. Also acts as a regulator of hematopoietic stem cell differentiation by mediating degradation of hemoregulatory peptide N-acetyl-SDKP (AcSDKP). Acts as a regulator of cannabinoid signaling pathway by mediating degradation of hemopressin, an antagonist peptide of the cannabinoid receptor CNR1. Involved in amyloid-beta metabolism by catalyzing degradation of Amyloid-beta protein 40 and Amyloid-beta protein 42 peptides, thereby preventing plaque formation. Catalyzes cleavage of cholecystokinin (maturation of Cholecystokinin-8 and Cholecystokinin-5) and Gonadoliberin-1 (both maturation and degradation) hormones. Degradation of hemoregulatory peptide N-acetyl-SDKP (AcSDKP) and amyloid-beta proteins is mediated by the N-terminal catalytic domain, while angiotensin I and cholecystokinin cleavage is mediated by the C-terminal catalytic region. Functionally, soluble form that is released in blood plasma and other body fluids following proteolytic cleavage in the juxtamembrane stalk region. Isoform produced by alternative promoter usage that is specifically expressed in spermatocytes and adult testis, and which is required for male fertility. In contrast to somatic isoforms, only contains one catalytic domain. Acts as a dipeptidyl carboxypeptidase that removes dipeptides from the C-terminus of substrates. The identity of substrates that are needed for male fertility is unknown. Isoform Testis-specific and isoform Somatic have distinct activities and cannot completely compensate for the loss of the other when expressed in somatic tissues or testis. May also have a glycosidase activity which releases GPI-anchored proteins from the membrane by cleaving the mannose linkage in the GPI moiety. The GPIase activity was reported to be essential for the egg-binding ability of the sperm. This activity is however unclear and has been challenged by other groups, suggesting that it may be indirect. The chain is Angiotensin-converting enzyme from Mus musculus (Mouse).